Here is a 289-residue protein sequence, read N- to C-terminus: Diaminopimelate epimerase (289 aa).

Substrate-binding residues include Asn11 and Asn78. The active-site Proton donor is Cys87. Residues 88–89, Asn163, Asn199, and 217–218 each bind substrate; these read GN and ER. Residue Cys226 is the Proton acceptor of the active site. Substrate is bound at residue 227 to 228; the sequence is GT.

This sequence belongs to the diaminopimelate epimerase family. In terms of assembly, homodimer.

The protein localises to the cytoplasm. It catalyses the reaction (2S,6S)-2,6-diaminopimelate = meso-2,6-diaminopimelate. Its pathway is amino-acid biosynthesis; L-lysine biosynthesis via DAP pathway; DL-2,6-diaminopimelate from LL-2,6-diaminopimelate: step 1/1. In terms of biological role, catalyzes the stereoinversion of LL-2,6-diaminopimelate (L,L-DAP) to meso-diaminopimelate (meso-DAP), a precursor of L-lysine and an essential component of the bacterial peptidoglycan. In Rhodococcus jostii (strain RHA1), this protein is Diaminopimelate epimerase.